The following is a 568-amino-acid chain: MALLVGGTLNPTTHLSLRSRAGRNSENVWLRSAASSQTSKGRFCNLTVRAGTPSKPSEPIGPVFTKLKPWQIPKRDWFSKDFLFGASTSAYQIEGAWNEDGKGPSTWDHFCHTYPERISDGTNGDVAANSYHMYEEDVKALKDMGMKVYRFSISWSRILPNGTGKPNQKGIDYYNNLINSLIRHGIVPYVTIWHWDTPQALEDKYGGFLDKQIVNDYKYFAELCFQSFGDRVKNWFTFNEPHTYCCFSYGEGIHAPGRCSPGLDCAVPEGDSLREPYTAGHHILLAHAEAVELFKAHYNKHGDSKIGMAFDVMGYEPYQDSFLDDQARERSIDYNMGWFLEPVVRGDYPFSMRSLIGDRLPMFTKEEQEKLGSLCDIMGLNYYTSRFSKHVDISSDYTPTLNTDDAYASSETTGSDGNEIGPITGTYWIYMYPKGLTDLLLIMKEKYGNPPIFITENGIADVEGDPEMPDPLDDWKRLDYLQRHISAVKDAIDQGADVRGHFTWGLIDNFEWGSGYSSRFGLVYIDKEDGNKRKLKKSAKWFAKFNSVPKTLLKTTNNNATVTASVSV.

A chloroplast-targeting transit peptide spans 1 to 50 (MALLVGGTLNPTTHLSLRSRAGRNSENVWLRSAASSQTSKGRFCNLTVRA). Residues Gln92, His194, and 239-240 (NE) each bind a beta-D-glucoside. The active-site Proton donor is the Glu240. A disulfide bridge connects residues Cys259 and Cys265. A beta-D-glucoside-binding positions include Tyr383, Glu456, Trp504, 511–512 (EW), and Phe520. The Nucleophile role is filled by Glu456.

This sequence belongs to the glycosyl hydrolase 1 family. In terms of assembly, homohexamer. As to expression, expressed in seedlings, mesocotyl, coleoptile, leaf sheath, and roots.

Its subcellular location is the plastid. The protein resides in the chloroplast. It catalyses the reaction DIMBOA beta-D-glucoside + H2O = DIMBOA + D-glucose. The enzyme catalyses DIBOA beta-D-glucoside + H2O = DIBOA + D-glucose. It carries out the reaction Hydrolysis of terminal, non-reducing beta-D-glucosyl residues with release of beta-D-glucose.. Its activity is regulated as follows. Inhibited by castanospermine, Ag(+) and Cu(2+). 34% inhibition by Zn(2+) and not affected by EDTA. Its function is as follows. Involved in defense of young plant parts against pests via the production of benzoxazolinones (hydroxamic acids) from hydroxamic acid glucosides. The preferred substrate is DIBOA-beta-D-glucoside. Can also use esculin and genistein glucoside as substrates, but no activity with salicin, p-nitrophenyl-alpha-glucoside or substrates related to cell wall components. The chain is 4-hydroxy-7-methoxy-3-oxo-3,4-dihydro-2H-1,4-benzoxazin-2-yl glucoside beta-D-glucosidase, chloroplastic from Secale cereale (Rye).